We begin with the raw amino-acid sequence, 482 residues long: tRNA sulfurtransferase (482 aa).

The THUMP domain maps to 61-165; that stretch reads LAIRDALTRI…DDRLLLIKGR (105 aa). ATP-binding positions include 183–184, K265, G287, and Q296; that span reads LI. An intrachain disulfide couples C344 to C456. In terms of domain architecture, Rhodanese spans 404 to 482; it reads FGPNDVILDI…GFNNVKVYRP (79 aa). The active-site Cysteine persulfide intermediate is C456.

Belongs to the ThiI family.

Its subcellular location is the cytoplasm. It carries out the reaction [ThiI sulfur-carrier protein]-S-sulfanyl-L-cysteine + a uridine in tRNA + 2 reduced [2Fe-2S]-[ferredoxin] + ATP + H(+) = [ThiI sulfur-carrier protein]-L-cysteine + a 4-thiouridine in tRNA + 2 oxidized [2Fe-2S]-[ferredoxin] + AMP + diphosphate. The catalysed reaction is [ThiS sulfur-carrier protein]-C-terminal Gly-Gly-AMP + S-sulfanyl-L-cysteinyl-[cysteine desulfurase] + AH2 = [ThiS sulfur-carrier protein]-C-terminal-Gly-aminoethanethioate + L-cysteinyl-[cysteine desulfurase] + A + AMP + 2 H(+). Its pathway is cofactor biosynthesis; thiamine diphosphate biosynthesis. Catalyzes the ATP-dependent transfer of a sulfur to tRNA to produce 4-thiouridine in position 8 of tRNAs, which functions as a near-UV photosensor. Also catalyzes the transfer of sulfur to the sulfur carrier protein ThiS, forming ThiS-thiocarboxylate. This is a step in the synthesis of thiazole, in the thiamine biosynthesis pathway. The sulfur is donated as persulfide by IscS. This chain is tRNA sulfurtransferase, found in Shigella boydii serotype 4 (strain Sb227).